Consider the following 314-residue polypeptide: Probable cell division protein WhiA (314 aa).

The H-T-H motif DNA-binding region spans 274-308; that stretch reads SLKELGEMVSTGPISKSGVNHRLRKLNDLADKIRN.

This sequence belongs to the WhiA family.

Its function is as follows. Involved in cell division and chromosome segregation. In Staphylococcus aureus (strain USA300), this protein is Probable cell division protein WhiA.